Consider the following 824-residue polypeptide: Leucine--tRNA ligase (824 aa).

A 'HIGH' region motif is present at residues 42 to 52; that stretch reads PYPSGKIHMGH. Residues 581-585 carry the 'KMSKS' region motif; the sequence is KMSKS. Lys584 contributes to the ATP binding site.

It belongs to the class-I aminoacyl-tRNA synthetase family.

The protein localises to the cytoplasm. The catalysed reaction is tRNA(Leu) + L-leucine + ATP = L-leucyl-tRNA(Leu) + AMP + diphosphate. This is Leucine--tRNA ligase from Citrifermentans bemidjiense (strain ATCC BAA-1014 / DSM 16622 / JCM 12645 / Bem) (Geobacter bemidjiensis).